The sequence spans 1875 residues: MSDHDTPMESIQNGENSDERLNAIASFFGCSLEQVKSFDGDVVKHLNDKLLQFNELKSENLKVTVSFDELKASSLKKIDGLKTEMENVIRENDKIRKERNDTFVKFESVENEKMKLSSELEFVKRKLDDLTEEKKETQSNQQRTLKILDERLKEIELVRVENNRSNSECKKLRSTIMDLETKQQGYITNDLNSRTELERKTQELTLLQSNNDWLEKELRSKNEQYLSYRQKTDKVILDIRNELNRLRNDFQMERTNNDVLKQKNNELSKSLQEKLLEIKGLSDSLNSEKQEFSAEMSLKQRLVDLLESQLNAVKEELNSIRELNTAKVIADDSKKQTPENEDLLKELQLTKEKLAQCEKECLRLSSITDEADEDNENLSAKSSSDFIFLKKQLIKERRTKEHLQNQIETFIVELEHKVPIINSFKERTDMLENELNNAALLLEHTSNEKNAKVKELNAKNQKLVECENDLQTLTKQRLDLCRQIQYLLITNSVSNDSKGPLRKEEIQFIQNIMQEDDSTITESDSQKVVTERLVEFKNIIQLQEKNAELLKVVRNLADKLESKEKKSKQSLQKIESETVNEAKEAIITLKSEKMDLESRIEELQKELEELKTSVPNEDASYSNVTIKQLTETKRDLESQVQDLQTRISQITRESTENMSLLNKEIQDLYDSKSDISIKLGKEKSSRILAEERFKLLSNTLDLTKAENDQLRKRFDYLQNTILKQDSKTHETLNEYVSCKSKLSIVETELLNLKEEQKLRVHLEKNLKQELNKLSPEKDSLRIMVTQLQTLQKEREDLLEETRKSCQKKIDELEDALSELKKETSQKDHHIKQLEEDNNSNIEWYQNKIEALKKDYESVITSVDSKQTDIEKLQYKVKSLEKEIEEDKIRLHTYNVMDETINDDSLRKELEKSKINLTDAYSQIKEYKDLYETTSQSLQQTNSKLDESFKDFTNQIKNLTDEKTSLEDKISLLKEQMFNLNNELDLQKKGMEKEKADFKKRISILQNNNKEVEAVKSEYESKLSKIQNDLDQQTIYANTAQNNYEQELQKHADVSKTISELREQLHTYKGQVKTLNLSRDQLENALKENEKSWSSQKESLLEQLDLSNSRIEDLSSQNKLLYDQIQIYTAADKEVNNSTNGPGLNNILITLRRERDILDTKVTVAERDAKMLRQKISLMDVELQDARTKLDNSRVEKENHSSIIQQHDDIMEKLNQLNLLRESNITLRNELENNNNKKKELQSELDKLKQNVAPIESELTALKYSMQEKEQELKLAKEEVHRWKKRSQDILEKHEQLSSSDYEKLESEIENLKEELENKERQGAEAEEKFNRLRRQAQERLKTSKLSQDSLTEQVNSLRDAKNVLENSLSEANARIEELQNAKVAQGNNQLEAIRKLQEDAEKASRELQAKLEESTTSYESTINGLNEEITTLKEEIEKQRQIQQQLQATSANEQNDLSNIVESMKKSFEEDKIKFIKEKTQEVNEKILEAQERLNQPSNINMEEIKKKWESEHEQEVSQKIREAEEALKKRIRLPTEEKINKIIERKKEELEKEFEEKVEERIKSMEQSGEIDVVLRKQLEAKVQEKQKELENEYNKKLQEELKDVPHSSHISDDERDKLRAEIESRLREEFNNELQAIKKKSFDEGKQQAMMKTTLLERKLAKMESQLSETKQSAESPPKSVNNVQNPLLGLPRKIEENSNSPFNPLLSGEKLLKLNSKSSSGGFNPFTSPSPNKHLQNDNDKRESLANKTDPPTHLEPSFNIPASRGLISSSSTLSTDTNDEELTSNNPAQKDSSNRNVQSEEDTEKKKEGEPVKRGEAIEEQTKSNKRPIDEVGELKNDEDDTTENINESKKIKTEDEEEKETDKVNDENSI.

Ser-2 bears the N-acetylserine mark. 2 coiled-coil regions span residues 69–487 (ELKA…IQYL) and 531–1678 (ERLV…SAES). Thr-337 carries the post-translational modification Phosphothreonine. Position 379 is a phosphoserine (Ser-379). A Required for nuclear localization motif is present at residues 1496-1565 (QPSNINMEEI…EEKVEERIKS (70 aa)). The interval 1641–1689 (KKSFDEGKQQAMMKTTLLERKLAKMESQLSETKQSAESPPKSVNNVQNP) is disordered. Residues 1667–1688 (SQLSETKQSAESPPKSVNNVQN) show a composition bias toward polar residues. Residues Ser-1670 and Ser-1710 each carry the phosphoserine modification. The segment covering 1716-1725 (KLNSKSSSGG) has biased composition (low complexity). Residues 1716-1875 (KLNSKSSSGG…TDKVNDENSI (160 aa)) are disordered. The span at 1728 to 1737 (PFTSPSPNKH) shows a compositional bias: polar residues. The residue at position 1733 (Ser-1733) is a Phosphoserine. A compositionally biased stretch (basic and acidic residues) spans 1738–1748 (LQNDNDKRESL). A compositionally biased stretch (polar residues) spans 1787–1801 (TSNNPAQKDSSNRNV). Position 1803 is a phosphoserine (Ser-1803). Basic and acidic residues-rich tracts occupy residues 1807–1840 (TEKK…GELK) and 1865–1875 (ETDKVNDENSI). Residues 1834-1866 (DEVGELKNDEDDTTENINESKKIKTEDEEEKET) adopt a coiled-coil conformation.

As to quaternary structure, component of the nuclear pore complex (NPC). NPC constitutes the exclusive means of nucleocytoplasmic transport. NPCs allow the passive diffusion of ions and small molecules and the active, nuclear transport receptor-mediated bidirectional transport of macromolecules such as proteins, RNAs, ribonucleoparticles (RNPs), and ribosomal subunits across the nuclear envelope. Due to its 8-fold rotational symmetry, all subunits are present with 8 copies or multiples thereof. Interacts with NAB2, a hnRNP required for mRNA export. Interacts with MLP2. May be phosphorylated by CDC28.

Its subcellular location is the nucleus. It localises to the nuclear pore complex. Functionally, together with the closely related MLP2, involved in the structural and functional organization of perinuclear chromatin. Together with MLP2, associates with the nuclear pore complex and form filamentous structures along the nuclear periphery. Has a role in the localization of Esc1 to nucleolar regions. Together with MLP2, mediates tethering of the some telomeres to the nuclear periphery, probably mediated by YKU70/YKU80 (HDF1/HDF2) heterodimer and show perinuclear location dependent silencing. MLP1 and MLP2 are involved in telomere length regulation but not silencing or telomere anchoring. Recognizes the 5'-splice site of pre-mRNAs and retains unspliced pre-mRNA in the nucleus without affecting splicing itself. The protein is Protein MLP1 (MLP1) of Saccharomyces cerevisiae (strain ATCC 204508 / S288c) (Baker's yeast).